The sequence spans 163 residues: D-aminoacyl-tRNA deacylase (163 aa).

The Gly-cisPro motif, important for rejection of L-amino acids motif lies at 141–142; that stretch reads GP.

It belongs to the DTD family. Homodimer.

Its subcellular location is the cytoplasm. It carries out the reaction glycyl-tRNA(Ala) + H2O = tRNA(Ala) + glycine + H(+). The enzyme catalyses a D-aminoacyl-tRNA + H2O = a tRNA + a D-alpha-amino acid + H(+). An aminoacyl-tRNA editing enzyme that deacylates mischarged D-aminoacyl-tRNAs. Also deacylates mischarged glycyl-tRNA(Ala), protecting cells against glycine mischarging by AlaRS. Acts via tRNA-based rather than protein-based catalysis; rejects L-amino acids rather than detecting D-amino acids in the active site. By recycling D-aminoacyl-tRNA to D-amino acids and free tRNA molecules, this enzyme counteracts the toxicity associated with the formation of D-aminoacyl-tRNA entities in vivo and helps enforce protein L-homochirality. The chain is D-aminoacyl-tRNA deacylase from Neisseria gonorrhoeae (strain ATCC 700825 / FA 1090).